The primary structure comprises 91 residues: Putative membrane protein insertion efficiency factor (91 aa).

The disordered stretch occupies residues 72-91 (SGGNDPVPEKLTHINHQHEK). Positions 78 to 91 (VPEKLTHINHQHEK) are enriched in basic and acidic residues.

Belongs to the UPF0161 family.

Its subcellular location is the cell inner membrane. In terms of biological role, could be involved in insertion of integral membrane proteins into the membrane. The polypeptide is Putative membrane protein insertion efficiency factor (Pseudoalteromonas translucida (strain TAC 125)).